A 793-amino-acid polypeptide reads, in one-letter code: Serine/threonine-protein kinase MARK1 (793 aa).

A disordered region spans residues 1 to 40 (MSARTPLPTVNERDTENHTSVDGYTETHIPPTKSSSRQNI). Thr5 carries the post-translational modification Phosphothreonine. Positions 60 to 311 (YRLQKTIGKG…LEQIMKDRWM (252 aa)) constitute a Protein kinase domain. Residues 66–74 (IGKGNFAKV) and Lys89 contribute to the ATP site. Asp182 functions as the Proton acceptor in the catalytic mechanism. Thr208 is modified (phosphothreonine). The residue at position 215 (Thr215) is a Phosphothreonine; by LKB1 and TAOK1. Residue Ser219 is modified to Phosphoserine; by GSK3-beta. Residues 329–370 (DLNDAKRIDIMVTMGFARDEINDALVSQKYDEVMATYILLGR) form the UBA domain. Disordered regions lie at residues 377 to 499 (GGES…GGSM) and 517 to 697 (LQNG…KPRS). Over residues 380 to 403 (SLSSGNLCQRSRPSSDLNNSTLQS) the composition is skewed to polar residues. Ser382, Ser390, Ser393, Ser403, Ser423, and Ser444 each carry phosphoserine. Residues 447 to 459 (SEQKEEWDKDTAR) show a composition bias toward basic and acidic residues. Polar residues predominate over residues 462–473 (GSTTVGSKSEVT). Ser475 carries the post-translational modification Phosphoserine. Residues 487-499 (AGPSNNVYSGGSM) show a composition bias toward polar residues. 2 stretches are compositionally biased toward low complexity: residues 523–547 (SSLTEMSASSMSSTGSTVASAGPSA) and 585–599 (PAASPSAHSISASTP). Ser588 is modified (phosphoserine). Thr613 is subject to Phosphothreonine; by PKC/PRKCZ. The segment covering 647 to 657 (GTSTGIISKIT) has biased composition (polar residues). Composition is skewed to basic and acidic residues over residues 661–676 (VRRDPSEGEASGRTDT) and 683–695 (EPKDKEEGKEAKP). Ser666 carries the post-translational modification Phosphoserine. Residues 744–793 (DARQDSLVQWEMEVCKLPRLSLNGVRFKRISGTSIAFKNIASKIANELKL) enclose the KA1 domain.

This sequence belongs to the protein kinase superfamily. CAMK Ser/Thr protein kinase family. SNF1 subfamily. In terms of assembly, interacts with MAPT/TAU. Mg(2+) serves as cofactor. In terms of processing, phosphorylation at Thr-613 by PRKCZ/aPKC in polarized epithelial cells inhibits the kinase activity. Phosphorylated at Thr-215 by STK11/LKB1 in complex with STE20-related adapter-alpha (STRADA) pseudo kinase and CAB39. Phosphorylation at Thr-215 by TAOK1 activates the kinase activity, leading to phosphorylation and detachment of MAPT/TAU from microtubules. Phosphorylation at Ser-219 by GSK3-beta (GSK3B) inhibits the kinase activity. In terms of tissue distribution, highly expressed in brain and spleen and at lower levels in kidney and skeletal muscle.

Its subcellular location is the cell membrane. The protein localises to the cytoplasm. It localises to the cytoskeleton. The protein resides in the cell projection. It is found in the dendrite. The enzyme catalyses L-seryl-[protein] + ATP = O-phospho-L-seryl-[protein] + ADP + H(+). The catalysed reaction is L-threonyl-[protein] + ATP = O-phospho-L-threonyl-[protein] + ADP + H(+). It catalyses the reaction L-seryl-[tau protein] + ATP = O-phospho-L-seryl-[tau protein] + ADP + H(+). It carries out the reaction L-threonyl-[tau protein] + ATP = O-phospho-L-threonyl-[tau protein] + ADP + H(+). Activated by phosphorylation on Thr-215. Inhibited by phosphorylation at Ser-219. Its function is as follows. Serine/threonine-protein kinase. Involved in cell polarity and microtubule dynamics regulation. Phosphorylates DCX, MAP2 and MAP4. Phosphorylates the microtubule-associated protein MAPT/TAU. Involved in cell polarity by phosphorylating the microtubule-associated proteins MAP2, MAP4 and MAPT/TAU at KXGS motifs, causing detachment from microtubules, and their disassembly. Involved in the regulation of neuronal migration through its dual activities in regulating cellular polarity and microtubule dynamics, possibly by phosphorylating and regulating DCX. Also acts as a positive regulator of the Wnt signaling pathway, probably by mediating phosphorylation of dishevelled proteins (DVL1, DVL2 and/or DVL3). The polypeptide is Serine/threonine-protein kinase MARK1 (Rattus norvegicus (Rat)).